An 875-amino-acid chain; its full sequence is MADLVSSCKDKLAYFRIKELKDILNQLGLPKQGKKQDLIDRVLALLTDEQGQRHHGWGRKNSLTKEAVAKIVDDTYRKMQIQCAPDLATRSHSGSDFSFRPIEEAYDSFQPEAKVRCICSSTMVNDSMIQCEDQRCQVWQHLNCVLIPDKPGESAEVPPVFYCELCRLSRADPFWVTAGNPLLPVKFVSSGVTNDGTSVPQSVEKSFQLSRSDRETVQRQEYDLQVWCMLLNDKVQFRMQWPQYAELHVNGISVRVVTRPGSQLLGINGRDDGPLITTCSREGINKICLSRVDARTFCFGVRIAKRRTVAQVLNLVPKEAEGESFEHALARVRRCLGGGDTAENADSDSDLEVVAESVTVNLRCPNSGSRMRIAGRFKPCIHMGCFDLETFVELNQRSRKWQCPICLKNYSLESLMIDPYFNRITSLLRNCNEDVNEVDVKPDGSWRVKGDAASRELSQWHMPDGTLCNPKEDVKPAMQNGNEQMMEGTSDGQKSLKIGIKRNPNGIWEVSSKADDKKPSVVGNRMQNNSGFRALNNIMHMSNSPTSSYRDGEDPSVNQESNRHVDLSLNNGNNEFDSFSLNFGQACNTDDRPQQQHNATDVIVLSDSDEENDAMVCPPAVYDNTTTANGSGFPFTTNGIGYTERYQEDAGVGTSGLGLLSNNVDDFEMNNWQMHSSYQQPEQGFQFFGNDTDVHNTFVGSHNSFGLAPNDYSLDCNVGVEEASVTPALSVCRNSNEMHGSLVDNPLALVGDDPSLQIFLPSQPSSVPLQEELSERANAPNGVQSDDWISLTLAAGGGGNEEPAPADVNSQPQIPSTETGIEPLTDAASAFLSTNIERRSGADLNPRRIENIFSHPRQPRSVRPRLCLSIDTDSE.

The SAP domain maps to 12–46; that stretch reads LAYFRIKELKDILNQLGLPKQGKKQDLIDRVLALL. Residues 114–169 form a PHD-type zinc finger; sequence KVRCICSSTMVNDSMIQCEDQRCQVWQHLNCVLIPDKPGESAEVPPVFYCELCRLS. Residues 349–430 form an SP-RING-type zinc finger; the sequence is SDLEVVAESV…FNRITSLLRN (82 aa). The Zn(2+) site is built by Cys380, His382, Cys403, and Cys406. The segment at 796–820 is disordered; that stretch reads GGGGNEEPAPADVNSQPQIPSTETG. The span at 808–819 shows a compositional bias: polar residues; that stretch reads VNSQPQIPSTET.

The protein belongs to the PIAS family.

Its subcellular location is the nucleus. It participates in protein modification; protein sumoylation. Its function is as follows. Probable SUMO E3 ligase that may regulate Pi starvation responses. The polypeptide is E3 SUMO-protein ligase SIZ1 (SIZ1) (Oryza sativa subsp. japonica (Rice)).